The sequence spans 359 residues: Tropomodulin-1 (359 aa).

The disordered stretch occupies residues 39–61; that stretch reads PDNALLPAGLRQKDQTTKAPTGP. Residues 39–138 form a tropomyosin-binding region; the sequence is PDNALLPAGL…CDIAAILGMH (100 aa).

Belongs to the tropomodulin family. In terms of assembly, binds to the N-terminus of tropomyosin and to actin. Interacts with FLII.

It is found in the cytoplasm. It localises to the cytoskeleton. Functionally, blocks the elongation and depolymerization of the actin filaments at the pointed end. The Tmod/TM complex contributes to the formation of the short actin protofilament, which in turn defines the geometry of the membrane skeleton. May play an important role in regulating the organization of actin filaments by preferentially binding to a specific tropomyosin isoform at its N-terminus. This chain is Tropomodulin-1 (TMOD1), found in Bos taurus (Bovine).